Here is a 458-residue protein sequence, read N- to C-terminus: tRNA modification GTPase MnmE (458 aa).

(6S)-5-formyl-5,6,7,8-tetrahydrofolate is bound by residues R23, E80, and K122. The region spanning 218–380 (GMKIVIAGRP…LREHLQQTMG (163 aa)) is the TrmE-type G domain. N228 is a binding site for K(+). Residues 228–233 (NVGKSS), 247–253 (TQIPGTT), 272–275 (DTAG), and 361–363 (SAR) contribute to the GTP site. S232 contributes to the Mg(2+) binding site. Residues T247, I249, and T252 each contribute to the K(+) site. T253 contacts Mg(2+). (6S)-5-formyl-5,6,7,8-tetrahydrofolate is bound at residue K458.

Belongs to the TRAFAC class TrmE-Era-EngA-EngB-Septin-like GTPase superfamily. TrmE GTPase family. Homodimer. Heterotetramer of two MnmE and two MnmG subunits. K(+) serves as cofactor.

It localises to the cytoplasm. In terms of biological role, exhibits a very high intrinsic GTPase hydrolysis rate. Involved in the addition of a carboxymethylaminomethyl (cmnm) group at the wobble position (U34) of certain tRNAs, forming tRNA-cmnm(5)s(2)U34. The chain is tRNA modification GTPase MnmE from Hamiltonella defensa subsp. Acyrthosiphon pisum (strain 5AT).